The following is a 732-amino-acid chain: Serine/threonine-protein kinase CBK1 (732 aa).

The interval 111–240 (SFDNHLNVDP…STEAANSDMT (130 aa)) is disordered. Polar residues predominate over residues 119–159 (DPNNTERFTSMDSMNFQPPASTFTQLGNGSSTNLSEISSGQ). The segment covering 160–171 (NSLLSNHSVNNL) has biased composition (low complexity). Polar residues predominate over residues 172 to 183 (PTALTSDTSPPV). The span at 185–221 (QHPQFQPQQQQQQQQPQQQQIFQQQQQQQQQQQQPQQ) shows a compositional bias: low complexity. The span at 222–240 (SRAVVNQSVSTEAANSDMT) shows a compositional bias: polar residues. Residues 281–310 (HAIERNQRRLELENKIANEDIGSSEERKNR) adopt a coiled-coil conformation. The Protein kinase domain occupies 335–647 (FHTVKVIGKG…AEEIKQHPFF (313 aa)). ATP-binding positions include 341–349 (IGKGAFGEV) and Lys-364. Asp-458 acts as the Proton acceptor in catalysis. The AGC-kinase C-terminal domain occupies 648–730 (RGVDWDSIRD…SRFDYLTRKN (83 aa)).

This sequence belongs to the protein kinase superfamily. STE Ser/Thr protein kinase family. COT1 subfamily. As to quaternary structure, interacts with MOB2 and BCR1.

It localises to the bud neck. The protein localises to the cell tip. It catalyses the reaction L-seryl-[protein] + ATP = O-phospho-L-seryl-[protein] + ADP + H(+). It carries out the reaction L-threonyl-[protein] + ATP = O-phospho-L-threonyl-[protein] + ADP + H(+). Functionally, serine/threonine-protein kinase required for wild-type hyphal growth and transcriptional regulation of cell-wall-associated genes. Involved in the biofilm formation through phosphorylation of the master regulator of biofilm formation BCR1. The chain is Serine/threonine-protein kinase CBK1 (CBK1) from Candida albicans (strain SC5314 / ATCC MYA-2876) (Yeast).